A 100-amino-acid chain; its full sequence is Gas vesicle protein J (100 aa).

It belongs to the gas vesicle GvpA family. Interacts with GvpA.

The protein resides in the gas vesicle. Its function is as follows. A minor component of the gas vesicle, might be involved in nucleating gas vesicle formation. This protein could be important for the shape determination of the gas vesicle. Gas vesicles (GV) are hollow, gas filled proteinaceous nanostructures. During planktonic growth they allow positioning of the organism at a favorable depth for light or nutrient acquisition. Functionally, when a minimal gvp locus (gvpA2-gvpR-gvpN-gvpF-gvpG-gvpL-gvpS-gvpK-gvpJ-gvpT-gvpU, called pNL29) is expressed in E.coli gas vesicles are made. The polypeptide is Gas vesicle protein J (Priestia megaterium (Bacillus megaterium)).